The sequence spans 1196 residues: Phosphoglucan, water dikinase, chloroplastic (1196 aa).

The N-terminal 54 residues, 1-54 (MESIGSHCCSSPFTFITRNSSSSLPRLVNITHRVNLSHQSHRLRNSNSRLTCTA), are a transit peptide targeting the chloroplast. Threonine 55 is subject to N-acetylthreonine. The CBM20 domain maps to 66–166 (KKDGSGTKVR…NFSVVCHWDA (101 aa)). Residues 174 to 200 (PQEVGNDDDVGDGGHERDNHDVGDDRV) are disordered. The span at 185-200 (DGGHERDNHDVGDDRV) shows a compositional bias: basic and acidic residues. Catalysis depends on histidine 759, which acts as the Tele-phosphohistidine intermediate. Residues 804–855 (LSTEGRSRTSKSSATKKTDKNSLSKKKTDKKSLSIDDEESKPGSSSSNSLLY) form a disordered region.

The protein belongs to the PEP-utilizing enzyme family. As to quaternary structure, homodimer. Requires Mg(2+) as cofactor. As to expression, in all starch containing tissues (e.g. roots, leaves, stems, inflorescence and siliques).

It is found in the plastid. The protein resides in the chloroplast. It catalyses the reaction [(1-&gt;4)-6-phospho-alpha-D-glucosyl](n) + n ATP + n H2O = [(1-&gt;4)-3,6-bisphospho-alpha-D-glucosyl](n) + n AMP + n phosphate + 2n H(+). Functionally, mediates the incorporation of phosphate into starch-like phospho-alpha-glucan, mostly at the C-3 position of glucose units. Required for starch degradation, suggesting that the phosphate content of starch regulates its degradability. The sequence is that of Phosphoglucan, water dikinase, chloroplastic (GWD3) from Arabidopsis thaliana (Mouse-ear cress).